The sequence spans 358 residues: uncharacterized protein (358 aa).

An N-terminal signal peptide occupies residues 1 to 15 (MITGKTISLPLSVIA). Cys-16 carries N-palmitoyl cysteine lipidation. Cys-16 carries S-diacylglycerol cysteine lipidation. The tract at residues 331-358 (PCGTGSPGNPPPNINSVAQHRISTNTNR) is disordered. A compositionally biased stretch (polar residues) spans 347–358 (VAQHRISTNTNR).

Its subcellular location is the cell membrane. This is an uncharacterized protein from Sinorhizobium fredii (strain NBRC 101917 / NGR234).